Consider the following 833-residue polypeptide: Putative GPI inositol-deacylase C (833 aa).

The active site involves Ser130. N-linked (GlcNAc...) asparagine glycans are attached at residues Asn191 and Asn456. A run of 5 helical transmembrane segments spans residues 521–541 (ILFISLPSAILYAIFLVQFHA), 560–580 (YLLTSCLAGSGIAYLTGLSQV), 617–637 (VLAPIFTVFSTGMVVLITELV), 672–692 (TVFVAVISVLVLLFFPYQLAF), and 723–743 (TICVLMTWTCIINAPVLAVWI). Asn772 carries N-linked (GlcNAc...) asparagine glycosylation. A helical membrane pass occupies residues 787–807 (LLLAYTSLHCLFYGMMQAFMI).

This sequence belongs to the GPI inositol-deacylase family.

The protein localises to the endoplasmic reticulum membrane. In terms of biological role, involved in inositol deacylation of GPI-anchored proteins which plays important roles in the quality control and ER-associated degradation of GPI-anchored proteins. This chain is Putative GPI inositol-deacylase C (BST1C), found in Yarrowia lipolytica (strain CLIB 122 / E 150) (Yeast).